Here is a 443-residue protein sequence, read N- to C-terminus: Thymidine phosphorylase (443 aa).

The protein belongs to the thymidine/pyrimidine-nucleoside phosphorylase family. Homodimer.

The enzyme catalyses thymidine + phosphate = 2-deoxy-alpha-D-ribose 1-phosphate + thymine. The protein operates within pyrimidine metabolism; dTMP biosynthesis via salvage pathway; dTMP from thymine: step 1/2. Its function is as follows. The enzymes which catalyze the reversible phosphorolysis of pyrimidine nucleosides are involved in the degradation of these compounds and in their utilization as carbon and energy sources, or in the rescue of pyrimidine bases for nucleotide synthesis. This Shewanella piezotolerans (strain WP3 / JCM 13877) protein is Thymidine phosphorylase.